The following is a 225-amino-acid chain: Small ribosomal subunit protein uS3 (225 aa).

The region spanning 16–85 (VYEYLVKETE…TPQIEVKDVK (70 aa)) is the KH type-2 domain. Residues 200–225 (GENVGTESETDKADEQGREAANTEES) are disordered. The segment covering 208-217 (ETDKADEQGR) has biased composition (basic and acidic residues).

Belongs to the universal ribosomal protein uS3 family. In terms of assembly, part of the 30S ribosomal subunit.

Functionally, binds the lower part of the 30S subunit head. This is Small ribosomal subunit protein uS3 from Thermoplasma volcanium (strain ATCC 51530 / DSM 4299 / JCM 9571 / NBRC 15438 / GSS1).